We begin with the raw amino-acid sequence, 110 residues long: uncharacterized protein (110 aa).

3 helical membrane-spanning segments follow: residues 32 to 52 (VLNV…ALVP), 57 to 77 (YTHM…CICI), and 90 to 110 (FLAS…TFVI).

The protein resides in the membrane. Its function is as follows. May play a role in proper chromosome segregation. Suppresses the high-frequency loss of mini-chromosomes when overexpressed, and this suppression is completely dependent on silencing protein SIR4. This is an uncharacterized protein from Saccharomyces cerevisiae (strain ATCC 204508 / S288c) (Baker's yeast).